Reading from the N-terminus, the 338-residue chain is Aspartate carbamoyltransferase catalytic subunit (338 aa).

Positions 59 and 60 each coordinate carbamoyl phosphate. Residue K87 participates in L-aspartate binding. R109, H142, and Q145 together coordinate carbamoyl phosphate. The L-aspartate site is built by R182 and R253. Residues G294 and P295 each coordinate carbamoyl phosphate.

This sequence belongs to the aspartate/ornithine carbamoyltransferase superfamily. ATCase family. Heterododecamer (2C3:3R2) of six catalytic PyrB chains organized as two trimers (C3), and six regulatory PyrI chains organized as three dimers (R2).

It carries out the reaction carbamoyl phosphate + L-aspartate = N-carbamoyl-L-aspartate + phosphate + H(+). It participates in pyrimidine metabolism; UMP biosynthesis via de novo pathway; (S)-dihydroorotate from bicarbonate: step 2/3. Its function is as follows. Catalyzes the condensation of carbamoyl phosphate and aspartate to form carbamoyl aspartate and inorganic phosphate, the committed step in the de novo pyrimidine nucleotide biosynthesis pathway. This Prochlorococcus marinus (strain MIT 9301) protein is Aspartate carbamoyltransferase catalytic subunit.